The following is a 178-amino-acid chain: Nucleoside triphosphate/diphosphate phosphatase (178 aa).

Residue R23 is the Proton donor of the active site. Residues N87, D103, D105, D107, D120, and E123 each contribute to the Mg(2+) site.

Belongs to the Ntdp family. It depends on Mg(2+) as a cofactor.

It carries out the reaction a ribonucleoside 5'-triphosphate + H2O = a ribonucleoside 5'-diphosphate + phosphate + H(+). The catalysed reaction is a ribonucleoside 5'-diphosphate + H2O = a ribonucleoside 5'-phosphate + phosphate + H(+). In terms of biological role, has nucleoside phosphatase activity towards nucleoside triphosphates and nucleoside diphosphates. This Latilactobacillus sakei subsp. sakei (strain 23K) (Lactobacillus sakei subsp. sakei) protein is Nucleoside triphosphate/diphosphate phosphatase.